Here is an 826-residue protein sequence, read N- to C-terminus: Periplasmic nitrate reductase (826 aa).

Positions 1–32 form a signal peptide, tat-type signal; that stretch reads MSISRREFLKANAAVAAATAVGATLPVKIVEA. In terms of domain architecture, 4Fe-4S Mo/W bis-MGD-type spans 39-95; sequence IKWDKAPCRFCGVGCSVLVGTDNGKVVATKGDPESPVNKGLNCIKGYFLSKIMYGKD. [4Fe-4S] cluster-binding residues include Cys-46, Cys-49, Cys-53, and Cys-81. Mo-bis(molybdopterin guanine dinucleotide) contacts are provided by residues Lys-83, Gln-150, Asn-175, Cys-179, 212–219, 262–264, Met-372, Gln-376, Asn-482, 508–509, Lys-531, Asp-558, and 716–725; these read WGANMAEM, QSD, SD, and TGRVLEHWHT. Substrate is bound at residue Phe-792. Positions 800 and 817 each coordinate Mo-bis(molybdopterin guanine dinucleotide).

Belongs to the prokaryotic molybdopterin-containing oxidoreductase family. NasA/NapA/NarB subfamily. Component of the periplasmic nitrate reductase NapAB complex composed of NapA and NapB. It depends on [4Fe-4S] cluster as a cofactor. Mo-bis(molybdopterin guanine dinucleotide) is required as a cofactor. In terms of processing, predicted to be exported by the Tat system. The position of the signal peptide cleavage has not been experimentally proven.

It is found in the periplasm. The enzyme catalyses 2 Fe(II)-[cytochrome] + nitrate + 2 H(+) = 2 Fe(III)-[cytochrome] + nitrite + H2O. Catalytic subunit of the periplasmic nitrate reductase complex NapAB. Receives electrons from NapB and catalyzes the reduction of nitrate to nitrite. This chain is Periplasmic nitrate reductase, found in Shewanella halifaxensis (strain HAW-EB4).